The primary structure comprises 178 residues: Putative peroxiredoxin in rubredoxin operon (178 aa).

The Thioredoxin domain occupies 3-163; the sequence is RLVGKPAPEF…TLRVLKAFQT (161 aa). The active-site Cysteine sulfenic acid (-SOH) intermediate is C50.

It belongs to the peroxiredoxin family. AhpC/Prx1 subfamily. Homodimer; disulfide-linked, upon oxidation.

It is found in the cytoplasm. The enzyme catalyses a hydroperoxide + [protein]-dithiol = [protein]-disulfide + an alcohol + H2O. Functionally, thiol-specific peroxidase that catalyzes the reduction of hydrogen peroxide and organic hydroperoxides to water and alcohols, respectively. Plays a role in cell protection against oxidative stress by detoxifying peroxides. This Clostridium pasteurianum protein is Putative peroxiredoxin in rubredoxin operon.